Reading from the N-terminus, the 383-residue chain is 8-amino-7-oxononanoate synthase (383 aa).

Positions 27 and 34 each coordinate substrate. Position 114–115 (114–115) interacts with pyridoxal 5'-phosphate; it reads GY. Histidine 139 contributes to the substrate binding site. Pyridoxal 5'-phosphate contacts are provided by residues serine 187, 212 to 215, and 232 to 235; these read DDAH and TLSK. At lysine 235 the chain carries N6-(pyridoxal phosphate)lysine. Threonine 344 lines the substrate pocket.

Belongs to the class-II pyridoxal-phosphate-dependent aminotransferase family. BioF subfamily. Homodimer. The cofactor is pyridoxal 5'-phosphate.

It catalyses the reaction 6-carboxyhexanoyl-[ACP] + L-alanine + H(+) = (8S)-8-amino-7-oxononanoate + holo-[ACP] + CO2. Its pathway is cofactor biosynthesis; biotin biosynthesis. In terms of biological role, catalyzes the decarboxylative condensation of pimeloyl-[acyl-carrier protein] and L-alanine to produce 8-amino-7-oxononanoate (AON), [acyl-carrier protein], and carbon dioxide. This is 8-amino-7-oxononanoate synthase from Methylorubrum extorquens (strain PA1) (Methylobacterium extorquens).